The primary structure comprises 192 residues: Elongation factor P (192 aa).

Belongs to the elongation factor P family.

Its subcellular location is the cytoplasm. The protein operates within protein biosynthesis; polypeptide chain elongation. In terms of biological role, involved in peptide bond synthesis. Stimulates efficient translation and peptide-bond synthesis on native or reconstituted 70S ribosomes in vitro. Probably functions indirectly by altering the affinity of the ribosome for aminoacyl-tRNA, thus increasing their reactivity as acceptors for peptidyl transferase. The chain is Elongation factor P from Borrelia garinii subsp. bavariensis (strain ATCC BAA-2496 / DSM 23469 / PBi) (Borreliella bavariensis).